The sequence spans 256 residues: MRSGALWPLLWGALVWTVGSVGAVMGSEDSVPGGVCWLQQGREATCSLVLKTRVSREECCASGNINTAWSNFTHPGNKISLLGFLGLVHCLPCKDSCDGVECGPGKACRMLGGRPHCECVPNCEGLPAGFQVCGSDGATYRDECELRTARCRGHPDLRVMYRGRCQKSCAQVVCPRPQSCLVDQTGSAHCVVCRAAPCPVPSNPGQELCGNNNVTYISSCHLRQATCFLGRSIGVRHPGICTGGPKVPAEEEENFV.

The signal sequence occupies residues 1-23 (MRSGALWPLLWGALVWTVGSVGA). Positions 34–105 (GVCWLQQGRE…SCDGVECGPG (72 aa)) constitute a TB domain. Intrachain disulfides connect Cys-36/Cys-59, Cys-46/Cys-90, Cys-60/Cys-93, Cys-97/Cys-108, Cys-102/Cys-117, Cys-119/Cys-151, Cys-123/Cys-144, and Cys-133/Cys-165. N-linked (GlcNAc...) asparagine glycosylation is present at Asn-71. The region spanning 97 to 117 (CDGVECGPGKACRMLGGRPHC) is the Follistatin-like 1 domain. Kazal-like domains follow at residues 111 to 167 (LGGR…RCQK) and 187 to 243 (SAHC…ICTG). The Follistatin-like 2 domain occupies 168-191 (SCAQVVCPRPQSCLVDQTGSAHCV). 3 cysteine pairs are disulfide-bonded: Cys-193/Cys-227, Cys-198/Cys-220, and Cys-209/Cys-241. The N-linked (GlcNAc...) asparagine glycan is linked to Asn-213.

Interacts with INHBA and INHBB. Interacts with FN1. Interacts with ADAM12. Interacts with MLLT10; the interaction enhances MLLT10 in vitro transcriptional activity and self-association. Interacts with MSTN. In terms of tissue distribution, abundantly expressed in heart, lung, kidney and testis. Continuously expressed in embryonic heart.

Its subcellular location is the secreted. It is found in the nucleus. Functionally, the secreted form is a binding and antagonizing protein for members of the TGF-beta family, such as activin, BMP2 and MSTN. Inhibits activin A-, activin B-, BMP2- and MSDT-induced cellular signaling; more effective on activin A than on activin B. Involved in bone formation; inhibits osteoclast differentiation. Involved in hematopoiesis; involved in differentiation of hemopoietic progenitor cells, increases hematopoietic cell adhesion to fibronectin and seems to contribute to the adhesion of hematopoietic precursor cells to the bone marrow stroma. The nuclear form is probably involved in transcriptional regulation via interaction with MLLT10. The sequence is that of Follistatin-related protein 3 (Fstl3) from Mus musculus (Mouse).